Here is a 314-residue protein sequence, read N- to C-terminus: SERTA domain-containing protein 2 (314 aa).

In terms of domain architecture, SERTA spans 33-80 (YTLQRQTIFNISLMKLYNHRPLTEPSLQKTVLINNMLRRIQEELKQEG). 2 disordered regions span residues 77–119 (KQEG…HPCD) and 181–222 (PTST…SKLM). Positions 87 to 97 (TPSSQPTTEPS) are enriched in polar residues. Low complexity predominate over residues 182–193 (TSTSTEAATAAT). Positions 210–221 (GPQESRADDSKL) are enriched in basic and acidic residues. The segment at 235-311 (TGFLTDLTLD…TELDHIMEVL (77 aa)) is required for transactivation activity. Residues 238 to 243 (LTDLTL) carry the Nuclear export signal (NES) motif.

In terms of assembly, interacts with XPO1; which mediates nuclear export. Interacts with TFDP1; modulates transactivation activity of TFDP1/E2F complexes. Polyubiquitinated, which promotes proteasomal degradation. In terms of tissue distribution, expressed in adipose tissue.

Its subcellular location is the nucleus. It is found in the cytoplasm. Functionally, acts at E2F-responsive promoters as coregulator to integrate signals provided by PHD- and/or bromodomain-containing transcription factors. May act as coactivator as well as corepressor of E2F1-TFDP1 and E2F4-TFDP1 complexes on E2F consensus binding sites, which would activate or inhibit E2F-target genes expression. Modulates fat storage by down-regulating the expression of key genes involved in adipocyte lipolysis, thermogenesis and oxidative metabolism. This is SERTA domain-containing protein 2 (SERTAD2) from Homo sapiens (Human).